A 232-amino-acid polypeptide reads, in one-letter code: Uracil-DNA glycosylase (232 aa).

The active-site Proton acceptor is the aspartate 64.

This sequence belongs to the uracil-DNA glycosylase (UDG) superfamily. UNG family.

It is found in the cytoplasm. The enzyme catalyses Hydrolyzes single-stranded DNA or mismatched double-stranded DNA and polynucleotides, releasing free uracil.. Functionally, excises uracil residues from the DNA which can arise as a result of misincorporation of dUMP residues by DNA polymerase or due to deamination of cytosine. The sequence is that of Uracil-DNA glycosylase from Shouchella clausii (strain KSM-K16) (Alkalihalobacillus clausii).